A 490-amino-acid polypeptide reads, in one-letter code: Nuclear transcription factor Y subunit beta (490 aa).

The tract at residues 1–48 (MSGNEDFIYDDNSSSSISNQTDGGGGGGSSNNNSGGNANNNNNEGDRE) is disordered. The span at 30 to 43 (SNNNSGGNANNNNN) shows a compositional bias: low complexity. Residues 53-59 (LPIANII) mediate DNA binding. The interval 80-91 (VQDCVSEFISFI) is subunit association domain (SAD). 2 disordered regions span residues 139–195 (EKNS…QQQQ) and 221–264 (QQQQ…NQQY). Over residues 181-195 (QQQQQPPQVQQQQQQ) the composition is skewed to low complexity. Residues 188–219 (QVQQQQQQQQQQQQQQLQQQQQLQQHQQQQLQ) are a coiled coil. Residues 269–307 (QQQQQQQQQQQQQQQQQQQQQQQQQQQQQQQQQQQQQVQ) adopt a coiled-coil conformation. Disordered regions lie at residues 325-370 (NQQA…QHLQ) and 399-490 (QFSN…PSTS). Positions 399–468 (QFSNNNNNNN…GNSLHNSGNS (70 aa)) are enriched in low complexity. The span at 478–490 (PYISTNPEYPSTS) shows a compositional bias: polar residues.

The protein belongs to the NFYB/HAP3 subunit family. Heterotrimeric transcription factor composed of three components, nfyA, nfyB and nfyC. nfyB and nfyC must interact and dimerize for nfyA association and DNA binding.

It is found in the nucleus. Component of the NF-Y/HAP transcription factor complex. The NF-Y complex stimulates the transcription of various genes by recognizing and binding to a CCAAT motif in promoters. The sequence is that of Nuclear transcription factor Y subunit beta (nfyB) from Dictyostelium discoideum (Social amoeba).